The chain runs to 1159 residues: Ferroxidase HEPHL1 (1159 aa).

The signal sequence occupies residues 1–24 (MPRKQPAGCIFLLTFLGLSGLVGT). Plastocyanin-like domains are found at residues 25 to 207 (VTRT…LLVC), 218 to 366 (TRND…VDNC), 379 to 561 (QRRY…LLVC), 571 to 719 (TQKG…VSSC), 731 to 907 (MIRT…LITC), and 915 to 1092 (KGRR…VPSN). The Extracellular segment spans residues 25–1114 (VTRTYYIGIV…KNLGPTGAKA (1090 aa)). Positions 127 and 129 each coordinate Cu cation. The N-linked (GlcNAc...) asparagine glycan is linked to Asn-161. Residues Cys-181 and Cys-207 are joined by a disulfide bond. His-187 and His-189 together coordinate Cu cation. N-linked (GlcNAc...) asparagine glycosylation occurs at Asn-236. An intrachain disulfide couples Cys-285 to Cys-366. 3 residues coordinate Cu cation: His-304, Cys-347, and His-352. N-linked (GlcNAc...) asparagine glycosylation is present at Asn-407. Cys-535 and Cys-561 form a disulfide bridge. N-linked (GlcNAc...) asparagine glycosylation occurs at Asn-589. Cys-638 and Cys-719 are disulfide-bonded. Residues His-657, Cys-700, His-705, and Met-710 each coordinate Cu cation. Asn-772 carries N-linked (GlcNAc...) asparagine glycosylation. Cysteines 881 and 907 form a disulfide. A glycan (N-linked (GlcNAc...) asparagine) is linked at Asn-935. 8 residues coordinate Cu cation: His-1003, His-1006, His-1008, His-1048, Cys-1049, His-1050, His-1054, and Met-1059. The helical transmembrane segment at 1115–1135 (ALVILFIIGLLLLITTVILSL) threads the bilayer. At 1136 to 1159 (RLCSAMKQTDYQQVQSCALPTDAL) the chain is on the cytoplasmic side.

It belongs to the multicopper oxidase family. Requires Cu cation as cofactor.

The protein localises to the membrane. The catalysed reaction is 4 Fe(2+) + O2 + 4 H(+) = 4 Fe(3+) + 2 H2O. Is a copper-binding glycoprotein with ferroxidase activity. It oxidizes Fe(2+) to Fe(3+) without releasing radical oxygen species. May be involved in the regulation of intracellular iron content. This Homo sapiens (Human) protein is Ferroxidase HEPHL1 (HEPHL1).